We begin with the raw amino-acid sequence, 187 residues long: MTNPDHTCVGAISGSFGVRGEVRLKSFCAEPSDIGSYGPLSTEDGAQTYTITLTRPVKAGYAAMLSGVATKEDADALRGTRLYAPRSALPSLPDDEFYHADLVGLTVLDTGGEVIGTVASVANHGAGDILELSGPGLPSGLLIPFTLAVVPTVDIAAGRVIVDMPDGLIGGDKPDTSDTAPLGQDFD.

Residues 94–168 (DDEFYHADLV…RVIVDMPDGL (75 aa)) enclose the PRC barrel domain. Residues 167–187 (GLIGGDKPDTSDTAPLGQDFD) form a disordered region.

This sequence belongs to the RimM family. As to quaternary structure, binds ribosomal protein uS19.

It is found in the cytoplasm. Its function is as follows. An accessory protein needed during the final step in the assembly of 30S ribosomal subunit, possibly for assembly of the head region. Essential for efficient processing of 16S rRNA. May be needed both before and after RbfA during the maturation of 16S rRNA. It has affinity for free ribosomal 30S subunits but not for 70S ribosomes. The chain is Ribosome maturation factor RimM from Jannaschia sp. (strain CCS1).